A 119-amino-acid polypeptide reads, in one-letter code: MARVKFGKVTRRRRKKILKLAKGYFGAKSKLFRVANQAVMKSLMYAYIGRKLRKRDFRKLWITRINAAARAHGISYSRFINGLKKAGIEINRKMLSEMAINDEKAFAELVNIAKQQLNA.

The protein belongs to the bacterial ribosomal protein bL20 family.

Its function is as follows. Binds directly to 23S ribosomal RNA and is necessary for the in vitro assembly process of the 50S ribosomal subunit. It is not involved in the protein synthesizing functions of that subunit. This is Large ribosomal subunit protein bL20 from Thermoanaerobacter pseudethanolicus (strain ATCC 33223 / 39E) (Clostridium thermohydrosulfuricum).